The sequence spans 291 residues: Phytanoyl-CoA dioxygenase domain-containing protein 1 (291 aa).

Threonine 55 is subject to Phosphothreonine. 2-oxoglutarate-binding positions include lysine 102, methionine 141, 156-158, and tryptophan 174; that span reads HQD. Residues histidine 156 and aspartate 158 each contribute to the Fe cation site. Fe cation is bound at residue histidine 246. Serine 248 and arginine 257 together coordinate 2-oxoglutarate.

It belongs to the PhyH family. PHYHD1 subfamily. It depends on Fe cation as a cofactor.

Its activity is regulated as follows. Activity is increased by ascorbate. Inhibited by myristoyl-CoA. 2-oxoglutarate(2OG)-dependent dioxygenase that catalyzes the conversion of 2-oxoglutarate to succinate and CO(2) in an iron-dependent manner. However, does not couple 2OG turnover to the hydroxylation of acyl-coenzyme A derivatives, implying that it is not directly involved in phytanoyl coenzyme-A metabolism. Does not show detectable activity towards fatty acid CoA thioesters. Functionally, isoform 2 probably lacks enzyme activity. Its function is as follows. Isoform 3 probably lacks enzyme activity. In Homo sapiens (Human), this protein is Phytanoyl-CoA dioxygenase domain-containing protein 1.